We begin with the raw amino-acid sequence, 538 residues long: Putative cysteine ligase BshC (538 aa).

Residues 460 to 484 (KINEQIELLERMLKRNVEKKHEVEL) are a coiled coil.

Belongs to the BshC family.

Its function is as follows. Involved in bacillithiol (BSH) biosynthesis. May catalyze the last step of the pathway, the addition of cysteine to glucosamine malate (GlcN-Mal) to generate BSH. This is Putative cysteine ligase BshC from Bacillus cereus (strain ZK / E33L).